Reading from the N-terminus, the 378-residue chain is Protein RecA (378 aa).

An ATP-binding site is contributed by 79–86 (GPESSGKT).

This sequence belongs to the RecA family.

The protein localises to the cytoplasm. Its function is as follows. Can catalyze the hydrolysis of ATP in the presence of single-stranded DNA, the ATP-dependent uptake of single-stranded DNA by duplex DNA, and the ATP-dependent hybridization of homologous single-stranded DNAs. It interacts with LexA causing its activation and leading to its autocatalytic cleavage. The sequence is that of Protein RecA from Streptococcus pyogenes serotype M28 (strain MGAS6180).